The primary structure comprises 617 residues: Kelch-like protein diablo (617 aa).

A disordered region spans residues 1-55 (MGDPLLPGSTGLGSGGTAAATGGTGTTGTGLGSGGTSGTERPPSPARLTHTSEKH). A compositionally biased stretch (gly residues) spans 10-37 (TGLGSGGTAAATGGTGTTGTGLGSGGTS). The 68-residue stretch at 73–140 (CDVVLNVGGR…CYTAHIIVEE (68 aa)) folds into the BTB domain. In terms of domain architecture, BACK spans 175-277 (CLGIRAFADT…SPKFLVGTVG (103 aa)). Kelch repeat units lie at residues 324-370 (VLFA…VLND), 372-418 (LYAV…VLDG), 419-465 (FLYA…VLSG), 467-512 (LYAI…VFNN), 514-559 (IYAV…VVNG), and 560-606 (QLYA…VMRA).

The protein operates within protein modification; protein ubiquitination. In terms of biological role, probable substrate-specific adapter of an E3 ubiquitin-protein ligase complex which mediates the ubiquitination and subsequent proteasomal degradation of target proteins. May have a role in synapse differentiation and growth. The polypeptide is Kelch-like protein diablo (Drosophila mojavensis (Fruit fly)).